Here is a 580-residue protein sequence, read N- to C-terminus: Sensor histidine kinase YvrG (580 aa).

At 1–6 the chain is on the cytoplasmic side; it reads MRLRWK. A helical membrane pass occupies residues 7-27; sequence FLFHFFGQMLIVILLLTVMLV. At 28–261 the chain is on the extracellular side; that stretch reads ASFFYLDARF…KSFLKVVLKA (234 aa). Residues 262–282 form a helical membrane-spanning segment; it reads MFLVMAVLFMYIIWMTVWYMF. The Cytoplasmic segment spans residues 283–580; that stretch reads RFGLPIFHTI…TVITILFKKQ (298 aa). In terms of domain architecture, Histidine kinase spans 363-580; that stretch reads GLSHDLKTPL…TVITILFKKQ (218 aa). A Phosphohistidine; by autocatalysis modification is found at His366.

It is found in the cell membrane. The catalysed reaction is ATP + protein L-histidine = ADP + protein N-phospho-L-histidine.. In terms of biological role, member of the two-component regulatory system YvrG/YvrH that positively regulates 7 transcriptional units (wprA, wapA-yxxG, dltABCDE, sunA, sunT-bdbA-yolJ-bdbB, sigO-rsoA, and sigX-rsiX), and negatively regulates the lytABC operon. Probably activates YvrH by phosphorylation. This is Sensor histidine kinase YvrG (yvrG) from Bacillus subtilis (strain 168).